Here is a 67-residue protein sequence, read N- to C-terminus: MKTSAYVKELQAQSVEQLQAQLVDAKKELFNLRFQNATNQLDNTARIKEVRKNIARIQTVITAKAAE.

This sequence belongs to the universal ribosomal protein uL29 family.

The sequence is that of Large ribosomal subunit protein uL29 from Agathobacter rectalis (strain ATCC 33656 / DSM 3377 / JCM 17463 / KCTC 5835 / VPI 0990) (Eubacterium rectale).